The primary structure comprises 329 residues: Phospho-N-acetylmuramoyl-pentapeptide-transferase (329 aa).

A run of 9 helical transmembrane segments spans residues 1–21, 53–73, 76–96, 109–129, 141–161, 175–195, 198–218, 237–257, and 309–329; these read MLLN…IGIP, MGGF…ALVF, FSPA…IGFL, GLTA…SYFI, ILSW…IWLV, GLAS…AVVH, YDVL…FVFN, FLAI…IGAV, and IVFW…YFAF.

It belongs to the glycosyltransferase 4 family. MraY subfamily. It depends on Mg(2+) as a cofactor.

It localises to the cell membrane. It carries out the reaction UDP-N-acetyl-alpha-D-muramoyl-L-alanyl-gamma-D-glutamyl-L-lysyl-D-alanyl-D-alanine + di-trans,octa-cis-undecaprenyl phosphate = Mur2Ac(oyl-L-Ala-gamma-D-Glu-L-Lys-D-Ala-D-Ala)-di-trans,octa-cis-undecaprenyl diphosphate + UMP. It participates in cell wall biogenesis; peptidoglycan biosynthesis. Functionally, catalyzes the initial step of the lipid cycle reactions in the biosynthesis of the cell wall peptidoglycan: transfers peptidoglycan precursor phospho-MurNAc-pentapeptide from UDP-MurNAc-pentapeptide onto the lipid carrier undecaprenyl phosphate, yielding undecaprenyl-pyrophosphoryl-MurNAc-pentapeptide, known as lipid I. The polypeptide is Phospho-N-acetylmuramoyl-pentapeptide-transferase (Lactococcus lactis subsp. cremoris (strain SK11)).